The sequence spans 913 residues: Protein translocase subunit SecA (913 aa).

Residues Q87, 105–109 (GEGKT), and D512 contribute to the ATP site. The interval 864-913 (LDQPEEEPAEVEGQPDVAVASVRTEPKIGRNEPCPCGSGKKYKHCHGQVQ) is disordered. Residues C897, C899, C908, and H909 each contribute to the Zn(2+) site. The span at 903 to 913 (KKYKHCHGQVQ) shows a compositional bias: basic residues.

This sequence belongs to the SecA family. Monomer and homodimer. Part of the essential Sec protein translocation apparatus which comprises SecA, SecYEG and auxiliary proteins SecDF-YajC and YidC. The cofactor is Zn(2+).

It localises to the cell inner membrane. It is found in the cytoplasm. It carries out the reaction ATP + H2O + cellular proteinSide 1 = ADP + phosphate + cellular proteinSide 2.. Its function is as follows. Part of the Sec protein translocase complex. Interacts with the SecYEG preprotein conducting channel. Has a central role in coupling the hydrolysis of ATP to the transfer of proteins into and across the cell membrane, serving both as a receptor for the preprotein-SecB complex and as an ATP-driven molecular motor driving the stepwise translocation of polypeptide chains across the membrane. This chain is Protein translocase subunit SecA, found in Stutzerimonas stutzeri (strain A1501) (Pseudomonas stutzeri).